Here is a 138-residue protein sequence, read N- to C-terminus: Small ribosomal subunit protein uS11c (138 aa).

It belongs to the universal ribosomal protein uS11 family. In terms of assembly, part of the 30S ribosomal subunit.

It localises to the plastid. The protein is Small ribosomal subunit protein uS11c of Cuscuta obtusiflora (Peruvian dodder).